We begin with the raw amino-acid sequence, 340 residues long: Glycerol-3-phosphate dehydrogenase [NAD(P)+] (340 aa).

The NADPH site is built by Ser-11, Trp-12, Arg-32, Arg-33, and Lys-106. Sn-glycerol 3-phosphate is bound by residues Lys-106, Gly-138, and Ser-140. Position 142 (Ala-142) interacts with NADPH. Residues Lys-193, Asp-246, Ser-256, Arg-257, and Asn-258 each coordinate sn-glycerol 3-phosphate. Lys-193 serves as the catalytic Proton acceptor. Residue Arg-257 participates in NADPH binding. Residues Val-281 and Glu-283 each coordinate NADPH.

The protein belongs to the NAD-dependent glycerol-3-phosphate dehydrogenase family.

The protein resides in the cytoplasm. It carries out the reaction sn-glycerol 3-phosphate + NAD(+) = dihydroxyacetone phosphate + NADH + H(+). It catalyses the reaction sn-glycerol 3-phosphate + NADP(+) = dihydroxyacetone phosphate + NADPH + H(+). It functions in the pathway membrane lipid metabolism; glycerophospholipid metabolism. In terms of biological role, catalyzes the reduction of the glycolytic intermediate dihydroxyacetone phosphate (DHAP) to sn-glycerol 3-phosphate (G3P), the key precursor for phospholipid synthesis. In Shouchella clausii (strain KSM-K16) (Alkalihalobacillus clausii), this protein is Glycerol-3-phosphate dehydrogenase [NAD(P)+].